A 265-amino-acid chain; its full sequence is Hydroxyethylthiazole kinase (265 aa).

Position 43 (methionine 43) interacts with substrate. ATP is bound by residues lysine 118 and threonine 165. Substrate is bound at residue glycine 192.

This sequence belongs to the Thz kinase family. It depends on Mg(2+) as a cofactor.

It carries out the reaction 5-(2-hydroxyethyl)-4-methylthiazole + ATP = 4-methyl-5-(2-phosphooxyethyl)-thiazole + ADP + H(+). It functions in the pathway cofactor biosynthesis; thiamine diphosphate biosynthesis; 4-methyl-5-(2-phosphoethyl)-thiazole from 5-(2-hydroxyethyl)-4-methylthiazole: step 1/1. In terms of biological role, catalyzes the phosphorylation of the hydroxyl group of 4-methyl-5-beta-hydroxyethylthiazole (THZ). This chain is Hydroxyethylthiazole kinase, found in Pyrococcus abyssi (strain GE5 / Orsay).